A 128-amino-acid chain; its full sequence is Histone H2A (128 aa).

The protein belongs to the histone H2A family. In terms of assembly, the nucleosome is a histone octamer containing two molecules each of H2A, H2B, H3 and H4 assembled in one H3-H4 heterotetramer and two H2A-H2B heterodimers. The octamer wraps approximately 147 bp of DNA.

The protein localises to the nucleus. The protein resides in the chromosome. Functionally, core component of nucleosome. Nucleosomes wrap and compact DNA into chromatin, limiting DNA accessibility to the cellular machineries which require DNA as a template. Histones thereby play a central role in transcription regulation, DNA repair, DNA replication and chromosomal stability. DNA accessibility is regulated via a complex set of post-translational modifications of histones, also called histone code, and nucleosome remodeling. The chain is Histone H2A (HTA1) from Encephalitozoon cuniculi (strain GB-M1) (Microsporidian parasite).